Here is a 1909-residue protein sequence, read N- to C-terminus: Nck-associated protein 5 (1909 aa).

Residues 71 to 253 (EKLIHELEEE…DLEQQNRTLS (183 aa)) are a coiled coil. Disordered regions lie at residues 351-370 (SSYT…SQNW), 736-819 (EEDT…LMEP), 855-997 (PLFE…KKPS), 1026-1469 (SSSF…APLS), 1486-1509 (KGQV…FASW), 1541-1592 (GFGN…RTPQ), 1725-1750 (FPLP…DAEP), and 1763-1885 (SMRA…DYGD). The segment covering 736–748 (EEDTEKNIPKDNV) has biased composition (basic and acidic residues). 4 stretches are compositionally biased toward polar residues: residues 753-789 (RVST…SRSS), 950-965 (APSS…SETA), 981-990 (VISSNPATTE), and 1066-1084 (PRIS…SKSV). Low complexity-rich tracts occupy residues 1110 to 1131 (SPSS…HNSP) and 1178 to 1187 (ASKSSVAVNK). The span at 1241–1250 (DGRDGVDNRS) shows a compositional bias: basic and acidic residues. Polar residues predominate over residues 1300–1325 (QIITNTAERGNSLTRQNSSTESSPNK). Residues 1339-1366 (GRPSGHPSSGKGSLGSSGSFSSQHGSPS) show a composition bias toward low complexity. Residues 1428-1446 (PGRTQHPSTFETSSTSKLE) show a composition bias toward polar residues. Residues 1454 to 1466 (ASATATDAVSSEA) show a composition bias toward low complexity. 2 stretches are compositionally biased toward basic and acidic residues: residues 1547–1560 (LKSE…KPEL) and 1567–1576 (ELIKDTKSAD). A compositionally biased stretch (polar residues) spans 1869–1878 (YSASGGSNSD).

Interacts with the SH3-containing region of the adapter protein NCK. Expressed in fetal and adult brain, leukocytes and fetal fibroblasts.

This Homo sapiens (Human) protein is Nck-associated protein 5 (NCKAP5).